The primary structure comprises 190 residues: Small ribosomal subunit protein uS7 (190 aa).

Thr2 bears the N-acetylthreonine mark.

The protein belongs to the universal ribosomal protein uS7 family. As to quaternary structure, component of the small ribosomal subunit. Part of the small subunit (SSU) processome, composed of more than 70 proteins and the RNA chaperone small nucleolar RNA (snoRNA) U3.

It localises to the cytoplasm. The protein resides in the nucleus. Its subcellular location is the nucleolus. Functionally, component of the small ribosomal subunit. The ribosome is a large ribonucleoprotein complex responsible for the synthesis of proteins in the cell. Part of the small subunit (SSU) processome, first precursor of the small eukaryotic ribosomal subunit. During the assembly of the SSU processome in the nucleolus, many ribosome biogenesis factors, an RNA chaperone and ribosomal proteins associate with the nascent pre-rRNA and work in concert to generate RNA folding, modifications, rearrangements and cleavage as well as targeted degradation of pre-ribosomal RNA by the RNA exosome. The sequence is that of Small ribosomal subunit protein uS7 (rps5) from Dictyostelium discoideum (Social amoeba).